We begin with the raw amino-acid sequence, 600 residues long: Estrogen receptor (600 aa).

The interval Met1 to Tyr189 is modulating (transactivation AF-1); mediates interaction with MACROD1. A glycan (O-linked (GlcNAc) serine) is linked at Ser10. Residues Met35–Ser47 are required for interaction with NCOA1. The segment at Met35–Met179 is interaction with DDX5; self-association. Phosphoserine; by CDK2 occurs at positions 109 and 111. Ser123 is modified (phosphoserine). Residues Asp148–Gly177 form a disordered region. Residues Ser159–Leu170 are compositionally biased toward basic and acidic residues. A Phosphoserine; by CK2 modification is found at Ser172. NR C4-type zinc fingers lie at residues Cys190–Cys210 and Cys226–Cys250. A DNA-binding region (nuclear receptor) is located at residues Cys190–Met255. The tract at residues Cys190–Leu315 is mediates interaction with DNTTIP2. Residues Met256–Leu315 form a hinge region. An Asymmetric dimethylarginine; by PRMT1 modification is found at Arg265. Residues Gly267–Ile600 form an interaction with AKAP13 region. Residues Met269–Ile600 are self-association. Residues Thr316–His552 enclose the NR LBD domain. The tract at residues Thr316 to Ile600 is transactivation AF-2. Glu358 and Arg399 together coordinate 17beta-estradiol. A lipid anchor (S-palmitoyl cysteine) is attached at Cys452. His529 contacts 17beta-estradiol. Tyr542 is subject to Phosphotyrosine; by Tyr-kinases. Positions Ala558 to Ala581 are disordered. Residues Ser569 to Ala581 are compositionally biased toward low complexity. Residue Thr576 is glycosylated (O-linked (GlcNAc) threonine).

Belongs to the nuclear hormone receptor family. NR3 subfamily. As to quaternary structure, interacts with BCAS3. Binds DNA as a homodimer. Can form a heterodimer with ESR2. Interacts with coactivator NCOA5. Interacts with PELP1, the interaction is enhanced by 17-beta-estradiol; the interaction increases ESR1 transcriptional activity. Interacts with NCOA7; the interaction is ligand-inducible. Interacts with AKAP13, CUEDC2, HEXIM1, KDM5A, MAP1S, SMARD1, and UBE1C. Interacts with MUC1; the interaction is stimulated by 7 beta-estradiol (E2) and enhances ESR1-mediated transcription. Interacts with DNTTIP2, and UIMC1. Interacts with KMT2D/MLL2. Interacts with ATAD2; the interaction is enhanced by estradiol. Interacts with KIF18A and LDB1. Interacts with RLIM (via its C-terminus). Interacts with MACROD1. Interacts with SH2D4A and PLCG. Interacts with SH2D4A; the interaction blocks binding to PLCG and inhibits estrogen-induced cell proliferation. Interacts with DYNLL1. Interacts with CCDC62; the interaction requires estradiol and appears to enhance the transcription of target genes. Interacts with NR2C1; the interaction prevents homodimerization of ESR1 and suppresses its transcriptional activity and cell growth. Interacts with DNAAF4. Interacts with PRMT2. Interacts with RBFOX2. Interacts with EP300; the interaction is estrogen-dependent and enhanced by CITED1. Interacts with CITED1; the interaction is estrogen-dependent. Interacts with FAM120B, FOXL2, PHB2 and SLC30A9. Interacts with coactivators NCOA3 and NCOA6. Interacts with STK3/MST2 only in the presence of SAV1 and vice-versa. Binds to CSNK1D. Interacts with NCOA2; NCOA2 can interact with ESR1 AF-1 and AF-2 domains simultaneously and mediate their transcriptional synergy. Interacts with DDX5. Interacts with NCOA1; the interaction seems to require a self-association of N-terminal and C-terminal regions. Interacts with ZNF366, DDX17, NFKB1, RELA, SP1 and SP3. Interacts with NRIP1. Interacts with GPER1; the interaction occurs in an estrogen-dependent manner. Interacts with TRIP4 (ufmylated); estrogen dependent. Interacts with LMTK3; the interaction phosphorylates ESR1 (in vitro) and protects it against proteasomal degradation. Interacts with CCAR2 (via N-terminus) in a ligand-independent manner. Interacts with ZFHX3. Interacts with SFR1 in a ligand-dependent and -independent manner. Interacts with DCAF13, LATS1 and DCAF1; regulates ESR1 ubiquitination and ubiquitin-mediated proteasomal degradation. Interacts (via DNA-binding domain) with POU4F2 (C-terminus); this interaction increases the estrogen receptor ESR1 transcriptional activity in a DNA- and ligand 17-beta-estradiol-independent manner. Interacts with ESRRB isoform 1. Interacts with UBE3A and WBP2. Interacts with GTF2B. Interacts with RBM39. In the absence of hormonal ligand, interacts with TACC1. Interacts with PI3KR1 or PI3KR2 and PTK2/FAK1. Interacts with SRC. Interacts with BAG1; the interaction is promoted in the absence of estradiol (17-beta-estradiol/E2). Interacts with and ubiquitinated by STUB1; the interaction is promoted in the absence of estradiol (17-beta-estradiol/E2). Interacts with NEDD8. Phosphorylated by cyclin A/CDK2 and CK1. Phosphorylation probably enhances transcriptional activity. Dephosphorylation at Ser-123 by PPP5C inhibits its transactivation activity. Phosphorylated by LMTK3 (in vitro). In terms of processing, ubiquitinated; regulated by LATS1 via DCAF1 it leads to ESR1 proteasomal degradation. Deubiquitinated by OTUB1. Ubiquitinated by STUB1/CHIP; in the CA1 hippocampal region following loss of endogenous circulating estradiol (17-beta-estradiol/E2). Ubiquitinated by UBR5, leading to its degradation: UBR5 specifically recognizes and binds ligand-bound ESR1 when it is not associated with coactivators (NCOAs). In presence of NCOAs, the UBR5-degron is not accessible, preventing its ubiquitination and degradation. Post-translationally, palmitoylated at Cys-452 by ZDHHC7 and ZDHHC21. This modification is required for plasma membrane targeting and for rapid intracellular signaling via ERK and AKT kinases and cAMP generation, but not for signaling mediated by the nuclear hormone receptor. Dimethylated by PRMT1 at Arg-265. The methylation may favor cytoplasmic localization. Demethylated by JMJD6 at Arg-265. Expressed in the CA1 region of the hippocampus, expression decreases with age (at protein level). Expressed in the uterus (at protein level).

It is found in the nucleus. It localises to the cytoplasm. Its subcellular location is the golgi apparatus. The protein resides in the cell membrane. In terms of biological role, nuclear hormone receptor. The steroid hormones and their receptors are involved in the regulation of eukaryotic gene expression and affect cellular proliferation and differentiation in target tissues. Ligand-dependent nuclear transactivation involves either direct homodimer binding to a palindromic estrogen response element (ERE) sequence or association with other DNA-binding transcription factors, such as AP-1/c-Jun, c-Fos, ATF-2, Sp1 and Sp3, to mediate ERE-independent signaling. Ligand binding induces a conformational change allowing subsequent or combinatorial association with multiprotein coactivator complexes through LXXLL motifs of their respective components. Mutual transrepression occurs between the estrogen receptor (ER) and NF-kappa-B in a cell-type specific manner. Decreases NF-kappa-B DNA-binding activity and inhibits NF-kappa-B-mediated transcription from the IL6 promoter and displace RELA/p65 and associated coregulators from the promoter. Recruited to the NF-kappa-B response element of the CCL2 and IL8 promoters and can displace CREBBP. Present with NF-kappa-B components RELA/p65 and NFKB1/p50 on ERE sequences. Can also act synergistically with NF-kappa-B to activate transcription involving respective recruitment adjacent response elements; the function involves CREBBP. Can activate the transcriptional activity of TFF1. Also mediates membrane-initiated estrogen signaling involving various kinase cascades. Essential for MTA1-mediated transcriptional regulation of BRCA1 and BCAS3. Maintains neuronal survival in response to ischemic reperfusion injury when in the presence of circulating estradiol (17-beta-estradiol/E2). This chain is Estrogen receptor (Esr1), found in Rattus norvegicus (Rat).